We begin with the raw amino-acid sequence, 471 residues long: UDP-glycosyltransferase CGT (471 aa).

H24 functions as the Proton acceptor in the catalytic mechanism. H24 serves as a coordination point for an anthocyanidin. The Charge relay role is filled by D120. A UDP-alpha-D-glucose-binding site is contributed by T143. The UDP stretch occupies residues 280–281 (SR). Residues V343, Q345, H360, W363, N364, S365, and E368 each coordinate UDP-alpha-D-glucose. G383 is an an anthocyanidin binding site. UDP-alpha-D-glucose contacts are provided by D384 and Q385.

This sequence belongs to the UDP-glycosyltransferase family.

It carries out the reaction a 3'-hydro-2'-hydroxy-beta-oxodihydrochalcone + UDP-alpha-D-glucose = a 3'-(beta-D-glucopyranosyl)-2'-hydroxy-beta-oxodihydrochalcone + UDP + H(+). In terms of biological role, UDP-glucose-dependent glucosyltransferase catalyzing the c-glucosylation of 2-hydroxyflavanones. The polypeptide is UDP-glycosyltransferase CGT (Oryza sativa subsp. japonica (Rice)).